A 490-amino-acid polypeptide reads, in one-letter code: Aspartyl/glutamyl-tRNA(Asn/Gln) amidotransferase subunit B (490 aa).

This sequence belongs to the GatB/GatE family. GatB subfamily. Heterotrimer of A, B and C subunits.

The catalysed reaction is L-glutamyl-tRNA(Gln) + L-glutamine + ATP + H2O = L-glutaminyl-tRNA(Gln) + L-glutamate + ADP + phosphate + H(+). It carries out the reaction L-aspartyl-tRNA(Asn) + L-glutamine + ATP + H2O = L-asparaginyl-tRNA(Asn) + L-glutamate + ADP + phosphate + 2 H(+). Functionally, allows the formation of correctly charged Asn-tRNA(Asn) or Gln-tRNA(Gln) through the transamidation of misacylated Asp-tRNA(Asn) or Glu-tRNA(Gln) in organisms which lack either or both of asparaginyl-tRNA or glutaminyl-tRNA synthetases. The reaction takes place in the presence of glutamine and ATP through an activated phospho-Asp-tRNA(Asn) or phospho-Glu-tRNA(Gln). This Burkholderia thailandensis (strain ATCC 700388 / DSM 13276 / CCUG 48851 / CIP 106301 / E264) protein is Aspartyl/glutamyl-tRNA(Asn/Gln) amidotransferase subunit B.